A 127-amino-acid chain; its full sequence is Modulator protein MzrA (127 aa).

The Cytoplasmic segment spans residues 1–11; the sequence is MRKPRVTLRHL. Residues 12–31 traverse the membrane as a helical segment; that stretch reads AWSTMLLMVLGTGMLFWSAV. Residues 32 to 127 are Periplasmic-facing; sequence RQQESTLAIR…RLRDAPHRMG (96 aa).

This sequence belongs to the MzrA family. As to quaternary structure, interacts with EnvZ.

Its subcellular location is the cell inner membrane. Its function is as follows. Modulates the activity of the EnvZ/OmpR two-component regulatory system, probably by directly modulating EnvZ enzymatic activity and increasing stability of phosphorylated OmpR. In Citrobacter rodentium (strain ICC168) (Citrobacter freundii biotype 4280), this protein is Modulator protein MzrA.